The following is a 321-amino-acid chain: Leucine-rich repeat-containing protein 46 (321 aa).

4 LRR repeats span residues 45–66 (ELQT…EGLK), 67–88 (NLHS…ACVP), 89–110 (SLRF…LDLP), and 111–132 (CLQF…EFPQ). The region spanning 142-184 (NSCTNQDSYRELVIEALPLLLDLDGQPVMERWISDEEDEASSE) is the LRRCT domain. 2 positions are modified to phosphoserine: Ser175 and Ser182. Residues 198 to 222 (RGFLKELEQELSRHREHRQQAALTQ) adopt a coiled-coil conformation. The tract at residues 235–321 (NLPLLPGVPM…TKTMAKRSKK (87 aa)) is disordered.

The protein resides in the cell projection. It is found in the cilium. The protein localises to the flagellum. Its function is as follows. Required for normal spermatogenesis and male fertility. Plays an important role in sperm flagellum biogenesis. This Macaca fascicularis (Crab-eating macaque) protein is Leucine-rich repeat-containing protein 46 (LRRC46).